Reading from the N-terminus, the 919-residue chain is Alpha-amylase (919 aa).

The first 33 residues, 1–33, serve as a signal peptide directing secretion; sequence MPATRRTARVRRVAAVTVTALAAALLPPLAARA. Residues N182 and D281 each contribute to the Ca(2+) site. D312 acts as the Nucleophile in catalysis. H316 is a Ca(2+) binding site. The active-site Proton donor is the E346. Positions 704 to 729 are disordered; sequence ASGRLHHRHPARRGGAHRRLPGPRGR. Residues 707–724 show a composition bias toward basic residues; it reads RLHHRHPARRGGAHRRLP.

Belongs to the glycosyl hydrolase 13 family. As to quaternary structure, monomer. Requires Ca(2+) as cofactor.

The protein resides in the secreted. It carries out the reaction Endohydrolysis of (1-&gt;4)-alpha-D-glucosidic linkages in polysaccharides containing three or more (1-&gt;4)-alpha-linked D-glucose units.. This chain is Alpha-amylase (amy), found in Streptomyces lividans.